The primary structure comprises 440 residues: Thymidine phosphorylase (440 aa).

The protein belongs to the thymidine/pyrimidine-nucleoside phosphorylase family. As to quaternary structure, homodimer.

The enzyme catalyses thymidine + phosphate = 2-deoxy-alpha-D-ribose 1-phosphate + thymine. Its pathway is pyrimidine metabolism; dTMP biosynthesis via salvage pathway; dTMP from thymine: step 1/2. In terms of biological role, the enzymes which catalyze the reversible phosphorolysis of pyrimidine nucleosides are involved in the degradation of these compounds and in their utilization as carbon and energy sources, or in the rescue of pyrimidine bases for nucleotide synthesis. The protein is Thymidine phosphorylase of Yersinia pestis.